A 374-amino-acid polypeptide reads, in one-letter code: Chaperone protein DnaJ (374 aa).

Residues 5 to 70 (DYYEVLGVER…NKRAAYDQYG (66 aa)) enclose the J domain. Residues 133–211 (GTSVNIRVPT…CHGEGRVEEY (79 aa)) form a CR-type zinc finger. C146, C149, C163, C166, C185, C188, C199, and C202 together coordinate Zn(2+). 4 CXXCXGXG motif repeats span residues 146 to 153 (CKPCDGSG), 163 to 170 (CPTCGGIG), 185 to 192 (CPRCHGQG), and 199 to 206 (CDSCHGEG).

The protein belongs to the DnaJ family. In terms of assembly, homodimer. Zn(2+) serves as cofactor.

It is found in the cytoplasm. In terms of biological role, participates actively in the response to hyperosmotic and heat shock by preventing the aggregation of stress-denatured proteins and by disaggregating proteins, also in an autonomous, DnaK-independent fashion. Unfolded proteins bind initially to DnaJ; upon interaction with the DnaJ-bound protein, DnaK hydrolyzes its bound ATP, resulting in the formation of a stable complex. GrpE releases ADP from DnaK; ATP binding to DnaK triggers the release of the substrate protein, thus completing the reaction cycle. Several rounds of ATP-dependent interactions between DnaJ, DnaK and GrpE are required for fully efficient folding. Also involved, together with DnaK and GrpE, in the DNA replication of plasmids through activation of initiation proteins. The sequence is that of Chaperone protein DnaJ from Pseudomonas fluorescens (strain SBW25).